The chain runs to 943 residues: MSERTSSSRRSKPASDDTIGNFVIDKEIGKGSFAQVYSGRHKVTGALVAIKSVELARLNTKLKDNLYGEIEILKRLRHPHIVALHDCVESRTHINLIMEYCELGDLSLFIKKRDKLITNPGTHELARKYPVAPNSGLNEVVIRHFLKQLTSAIRFLREANLIHRDVKPQNLLLLPSPQYREANKMHKQILSASHDSFTPAAGLPSLPMLKLADFGFARVLPSTSLAETLCGSPLYMAPEILRYEKYDAKADLWSVGTVLYEMATGRPPFRAVNHVDLLRKIEASGDVIRFSRECVVSSEVKGLVRALLKRNPVERISFEDFFHHPVITGPIPGLVEDDIPKPEKPVLAETKSRIRRANPELSHTRRSRAGPHLLATPIEPKPNPLEQVASPRLSYSPRQEADEGLGIRRPLAQPSTSAPVRPISYVDRSRRYSNASTKVPARDTPPPPHEGSNRSRPKSAVSRPLTDEDKAAQDVAFERDYIIIDKTAVEVNALADQISLYPQQGQPKSGGQIVRRATQQGHPTSTTGAVPSHPGRNAQGGRNDHYRKASHDKTLSGSPGATTSVISKAIQDASLRLFGFKYSPQMLSKGQSPPQIYSPFPAYPTPSTPAGLIMDGKQSAPVDEDSRVAQCIEDYATRSDVVYGFAEVKYKQLVPLAPSVEHGLGGVPTDRMGEEEEGLTMDAVVSLSEEALVLYVKALSLLAKSMDIASLWWSRKSRPESSNNVHSATRDSVNTQALVLKINAAVQWIRSRFNEVLEKAEIVRLRLVEAQNQLPEEHPSHPSNRPPETSALGGSSGGQATFPSVGISAEKLMYDRAVEMSRTAAINEIASEDLPGCEISYVTAVRMLEAVLDSDDDHLPKRRVSTSSKEEQSVAAQDASDDMSSDDKQAVQKMVQMINTRLTYLRKRMHTIAAASKAQQQQQQQQVVVRRRSGDVTPRSVPT.

The region spanning 22 to 327 (FVIDKEIGKG…FEDFFHHPVI (306 aa)) is the Protein kinase domain. ATP contacts are provided by residues 28 to 36 (IGKGSFAQV) and K51. D165 acts as the Proton acceptor in catalysis. 5 disordered regions span residues 334–468 (LVED…LTDE), 503–561 (QQGQ…SPGA), 774–800 (LPEE…GGQA), 858–888 (HLPK…SDDK), and 914–943 (AASK…SVPT). The span at 338-352 (DIPKPEKPVLAETKS) shows a compositional bias: basic and acidic residues. Polar residues predominate over residues 517–529 (ATQQGHPTSTTGA). Positions 542–554 (RNDHYRKASHDKT) are enriched in basic and acidic residues. Residues 919–928 (QQQQQQQQVV) are compositionally biased toward low complexity.

It belongs to the protein kinase superfamily. Ser/Thr protein kinase family. APG1/unc-51/ULK1 subfamily. As to quaternary structure, homodimer. Forms a ternary complex with ATG13 and ATG17.

The protein localises to the cytoplasm. It is found in the preautophagosomal structure membrane. The catalysed reaction is L-seryl-[protein] + ATP = O-phospho-L-seryl-[protein] + ADP + H(+). The enzyme catalyses L-threonyl-[protein] + ATP = O-phospho-L-threonyl-[protein] + ADP + H(+). In terms of biological role, serine/threonine protein kinase involved in the cytoplasm to vacuole transport (Cvt) and found to be essential in autophagy, where it is required for the formation of autophagosomes. Involved in the clearance of protein aggregates which cannot be efficiently cleared by the proteasome. Required for selective autophagic degradation of the nucleus (nucleophagy) as well as for mitophagy which contributes to regulate mitochondrial quantity and quality by eliminating the mitochondria to a basal level to fulfill cellular energy requirements and preventing excess ROS production. Also involved in endoplasmic reticulum-specific autophagic process, in selective removal of ER-associated degradation (ERAD) substrates. Plays a key role in ATG9 and ATG23 cycling through the pre-autophagosomal structure and is necessary to promote ATG18 binding to ATG9 through phosphorylation of ATG9. Catalyzes phosphorylation of ATG4, decreasing the interaction between ATG4 and ATG8 and impairing deconjugation of PE-conjugated forms of ATG8. This chain is Serine/threonine-protein kinase ATG1, found in Chaetomium globosum (strain ATCC 6205 / CBS 148.51 / DSM 1962 / NBRC 6347 / NRRL 1970) (Soil fungus).